The primary structure comprises 334 residues: Proline-serine-threonine phosphatase-interacting protein 2 (334 aa).

The 261-residue stretch at 4–264 folds into the F-BAR domain; sequence SLFKGNFWSA…SLEMCSIQRD (261 aa). Residues 66 to 166 adopt a coiled-coil conformation; the sequence is GQSEINTLKR…AVSRSANLVN (101 aa). Residues 295–322 form a disordered region; it reads VPAGKATGPNLARRGPLPIPKSSPDDPN. Tyr-323 and Tyr-329 each carry phosphotyrosine.

Phosphorylated on tyrosine.

It is found in the cytoplasm. It localises to the membrane. Its function is as follows. Binds to F-actin. May be involved in regulation of the actin cytoskeleton. The sequence is that of Proline-serine-threonine phosphatase-interacting protein 2 (PSTPIP2) from Homo sapiens (Human).